Here is a 95-residue protein sequence, read N- to C-terminus: Aspartyl/glutamyl-tRNA(Asn/Gln) amidotransferase subunit C (95 aa).

It belongs to the GatC family. Heterotrimer of A, B and C subunits.

It carries out the reaction L-glutamyl-tRNA(Gln) + L-glutamine + ATP + H2O = L-glutaminyl-tRNA(Gln) + L-glutamate + ADP + phosphate + H(+). It catalyses the reaction L-aspartyl-tRNA(Asn) + L-glutamine + ATP + H2O = L-asparaginyl-tRNA(Asn) + L-glutamate + ADP + phosphate + 2 H(+). In terms of biological role, allows the formation of correctly charged Asn-tRNA(Asn) or Gln-tRNA(Gln) through the transamidation of misacylated Asp-tRNA(Asn) or Glu-tRNA(Gln) in organisms which lack either or both of asparaginyl-tRNA or glutaminyl-tRNA synthetases. The reaction takes place in the presence of glutamine and ATP through an activated phospho-Asp-tRNA(Asn) or phospho-Glu-tRNA(Gln). The sequence is that of Aspartyl/glutamyl-tRNA(Asn/Gln) amidotransferase subunit C from Bradyrhizobium diazoefficiens (strain JCM 10833 / BCRC 13528 / IAM 13628 / NBRC 14792 / USDA 110).